The sequence spans 228 residues: Protein K8.1 (228 aa).

Positions 1 to 26 are cleaved as a signal peptide; it reads MSSTQIRTEIPVALLILCLCLVACHA. Asn-55, Asn-60, Asn-70, and Asn-85 each carry an N-linked (GlcNAc...) asparagine; by host glycan. The segment at 77-113 is disordered; the sequence is GSPSSEYPNVSVSVEDTSASGSGEDAIDESGSGEEER. Residues 78-97 are compositionally biased toward polar residues; that stretch reads SPSSEYPNVSVSVEDTSASG. A helical membrane pass occupies residues 197-217; that stretch reads LYILWAVGLLLGLVLILYLCV.

It is found in the host membrane. This chain is Protein K8.1 (K8.1), found in Human herpesvirus 8 type P (isolate GK18) (HHV-8).